Reading from the N-terminus, the 626-residue chain is Basic helix-loop-helix ARNT-like protein 1 (626 aa).

The interval 1-58 is disordered; the sequence is MADQRMDISSTISDFMSPGPTDLLSGSLSTSGVDCNRKRKGSATDYQESMDTDKDDPH. Position 17 is a phosphoserine; by GSK3-beta (Ser17). The span at 17-32 shows a compositional bias: low complexity; it reads SPGPTDLLSGSLSTSG. Thr21 bears the Phosphothreonine; by GSK3-beta mark. The short motif at 36–41 is the Nuclear localization signal element; the sequence is NRKRKG. Residues 72–125 enclose the bHLH domain; that stretch reads NAREAHSQIEKRRRDKMNSFIDELASLVPTCNAMSRKLDKLTVLRMAVQHMKTL. Ser78 is modified (phosphoserine). Ser90 carries the phosphoserine; by CK2 modification. The Nuclear export signal 1 motif lies at 142 to 152; that stretch reads LSDDELKHLIL. Residues 143 to 215 form the PAS 1 domain; that stretch reads SDDELKHLIL…EQLSSSDTAP (73 aa). A Glycyl lysine isopeptide (Lys-Gly) (interchain with G-Cter in SUMO2 and SUMO3) cross-link involves residue Lys252. Residue Lys259 forms a Glycyl lysine isopeptide (Lys-Gly) (interchain with G-Cter in SUMO); alternate linkage. A Glycyl lysine isopeptide (Lys-Gly) (interchain with G-Cter in SUMO2); alternate cross-link involves residue Lys259. The PAS 2 domain maps to 326–396; it reads PQPVNGEIRV…ECHRQVLQTR (71 aa). The short motif at 361-369 is the Nuclear export signal 2 element; the sequence is LAYLPQELL. One can recognise a PAC domain in the interval 401–444; the sequence is TNCYKFKIKDGSFITLRSRWFSFMNPWTKEVEYIVSTNTVVLAN. Disordered regions lie at residues 459–492 and 511–595; these read SPHS…RAGA and GSSP…SPSN. The tract at residues 508 to 588 is interaction with CIART; that stretch reads RIRGSSPSSC…IGIDMIDNDQ (81 aa). Positions 511–521 are enriched in low complexity; sequence GSSPSSCGSSP. Lys538 carries the post-translational modification N6-acetyllysine.

Component of the circadian clock oscillator which includes the CRY1/2 proteins, CLOCK or NPAS2, BMAL1 or BMAL2, CSNK1D and/or CSNK1E, TIMELESS and the PER1/2/3 proteins. Forms a heterodimer with CLOCK. The CLOCK-BMAL1 heterodimer is required for E-box-dependent transactivation, for CLOCK nuclear translocation and degradation, and, for phosphorylation of both CLOCK and BMAL1. Part of a nuclear complex which also includes RACK1 and PRKCA; RACK1 and PRKCA are recruited to the complex in a circadian manner. Interacts with NPAS2. Interacts with EZH2. Interacts with SUMO3. Interacts with SIRT1. Interacts with AHR. Interacts with ID1, ID2 and ID3. Interacts with DDX4. Interacts with OGT. Interacts with EED and SUZ12. Interacts with MTA1. Interacts with CIART. Interacts with HSP90. Interacts with KAT2B and EP300. Interacts with BHLHE40/DEC1 and BHLHE41/DEC2. Interacts with RELB and the interaction is enhanced in the presence of CLOCK. Interacts with PER1, PER2, CRY1 and CRY2 and this interaction requires a translocation to the nucleus. Interaction of the CLOCK-BMAL1 heterodimer with PER or CRY inhibits transcription activation. Interaction of the CLOCK-BMAL1 with CRY1 is independent of DNA but with PER2 is off DNA. The CLOCK-BMAL1 heterodimer interacts with GSK3B. Interacts with KDM5A. Interacts with KMT2A; in a circadian manner. Interacts with UBE3A. Interacts with PRKCG. Interacts with MAGEL2. Interacts with NCOA2. Interacts with THRAP3. The CLOCK-BMAL1 heterodimer interacts with PASD1. Interacts with PASD1. Interacts with USP9X. Interacts with PIWIL2 (via PIWI domain). Interacts with HDAC3. Interacts with HNF4A. In terms of processing, ubiquitinated, leading to its proteasomal degradation. Deubiquitinated by USP9X. Post-translationally, O-glycosylated; contains O-GlcNAc. O-glycosylation by OGT prevents protein degradation by inhibiting ubiquitination. It also stabilizes the CLOCK-BMAL1 heterodimer thereby increasing CLOCK-BMAL1-mediated transcription of genes in the negative loop of the circadian clock such as PER1/2/3 and CRY1/2. Acetylated on Lys-538 by CLOCK during the repression phase of the circadian cycle. Acetylation facilitates recruitment of CRY1 protein and initiates the repression phase of the circadian cycle. Acetylated at Lys-538 by KAT5 during the activation phase of the cycle, leading to recruitment of the positive transcription elongation factor b (P-TEFb) and BRD4, followed by productive elongation of circadian transcripts. Deacetylated by SIRT1, which may result in decreased protein stability. In terms of processing, phosphorylated upon dimerization with CLOCK. Phosphorylation enhances the transcriptional activity, alters the subcellular localization and decreases the stability of the CLOCK-BMAL1 heterodimer by promoting its degradation. Phosphorylation shows circadian variations in the liver with a peak between CT10 to CT14. Phosphorylation at Ser-90 by CK2 is essential for its nuclear localization, its interaction with CLOCK and controls CLOCK nuclear entry. Dephosphorylation at Ser-78 is important for dimerization with CLOCK and transcriptional activity. Post-translationally, sumoylated on Lys-259 upon dimerization with CLOCK. Predominantly conjugated to poly-SUMO2/3 rather than SUMO1 and the level of these conjugates undergo rhythmic variation, peaking at CT9-CT12. Sumoylation localizes it exclusively to the PML body and promotes its ubiquitination in the PML body, ubiquitin-dependent proteasomal degradation and the transcriptional activity of the CLOCK-BMAL1 heterodimer. Undergoes lysosome-mediated degradation in a time-dependent manner in the liver.

The protein localises to the nucleus. The protein resides in the cytoplasm. It is found in the PML body. In terms of biological role, transcriptional activator which forms a core component of the circadian clock. The circadian clock, an internal time-keeping system, regulates various physiological processes through the generation of approximately 24 hour circadian rhythms in gene expression, which are translated into rhythms in metabolism and behavior. It is derived from the Latin roots 'circa' (about) and 'diem' (day) and acts as an important regulator of a wide array of physiological functions including metabolism, sleep, body temperature, blood pressure, endocrine, immune, cardiovascular, and renal function. Consists of two major components: the central clock, residing in the suprachiasmatic nucleus (SCN) of the brain, and the peripheral clocks that are present in nearly every tissue and organ system. Both the central and peripheral clocks can be reset by environmental cues, also known as Zeitgebers (German for 'timegivers'). The predominant Zeitgeber for the central clock is light, which is sensed by retina and signals directly to the SCN. The central clock entrains the peripheral clocks through neuronal and hormonal signals, body temperature and feeding-related cues, aligning all clocks with the external light/dark cycle. Circadian rhythms allow an organism to achieve temporal homeostasis with its environment at the molecular level by regulating gene expression to create a peak of protein expression once every 24 hours to control when a particular physiological process is most active with respect to the solar day. Transcription and translation of core clock components (CLOCK, NPAS2, BMAL1, BMAL2, PER1, PER2, PER3, CRY1 and CRY2) plays a critical role in rhythm generation, whereas delays imposed by post-translational modifications (PTMs) are important for determining the period (tau) of the rhythms (tau refers to the period of a rhythm and is the length, in time, of one complete cycle). A diurnal rhythm is synchronized with the day/night cycle, while the ultradian and infradian rhythms have a period shorter and longer than 24 hours, respectively. Disruptions in the circadian rhythms contribute to the pathology of cardiovascular diseases, cancer, metabolic syndromes and aging. A transcription/translation feedback loop (TTFL) forms the core of the molecular circadian clock mechanism. Transcription factors, CLOCK or NPAS2 and BMAL1 or BMAL2, form the positive limb of the feedback loop, act in the form of a heterodimer and activate the transcription of core clock genes and clock-controlled genes (involved in key metabolic processes), harboring E-box elements (5'-CACGTG-3') within their promoters. The core clock genes: PER1/2/3 and CRY1/2 which are transcriptional repressors form the negative limb of the feedback loop and interact with the CLOCK|NPAS2-BMAL1|BMAL2 heterodimer inhibiting its activity and thereby negatively regulating their own expression. This heterodimer also activates nuclear receptors NR1D1/2 and RORA/B/G, which form a second feedback loop and which activate and repress BMAL1 transcription, respectively. BMAL1 positively regulates myogenesis and negatively regulates adipogenesis via the transcriptional control of the genes of the canonical Wnt signaling pathway. Plays a role in normal pancreatic beta-cell function; regulates glucose-stimulated insulin secretion via the regulation of antioxidant genes NFE2L2/NRF2 and its targets SESN2, PRDX3, CCLC and CCLM. Negatively regulates the mTORC1 signaling pathway; regulates the expression of MTOR and DEPTOR. Controls diurnal oscillations of Ly6C inflammatory monocytes; rhythmic recruitment of the PRC2 complex imparts diurnal variation to chemokine expression that is necessary to sustain Ly6C monocyte rhythms. Regulates the expression of HSD3B2, STAR, PTGS2, CYP11A1, CYP19A1 and LHCGR in the ovary and also the genes involved in hair growth. Plays an important role in adult hippocampal neurogenesis by regulating the timely entry of neural stem/progenitor cells (NSPCs) into the cell cycle and the number of cell divisions that take place prior to cell-cycle exit. Regulates the circadian expression of CIART and KLF11. The CLOCK-BMAL1 heterodimer regulates the circadian expression of SERPINE1/PAI1, VWF, B3, CCRN4L/NOC, NAMPT, DBP, MYOD1, PPARGC1A, PPARGC1B, SIRT1, GYS2, F7, NGFR, GNRHR, BHLHE40/DEC1, ATF4, MTA1, KLF10 and also genes implicated in glucose and lipid metabolism. Promotes rhythmic chromatin opening, regulating the DNA accessibility of other transcription factors. May play a role in spermatogenesis; contributes to the chromatoid body assembly and physiology. The NPAS2-BMAL1 heterodimer positively regulates the expression of MAOA, F7 and LDHA and modulates the circadian rhythm of daytime contrast sensitivity by regulating the rhythmic expression of adenylate cyclase type 1 (ADCY1) in the retina. The preferred binding motif for the CLOCK-BMAL1 heterodimer is 5'-CACGTGA-3', which contains a flanking adenine nucleotide at the 3-prime end of the canonical 6-nucleotide E-box sequence. CLOCK specifically binds to the half-site 5'-CAC-3', while BMAL1 binds to the half-site 5'-GTGA-3'. The CLOCK-BMAL1 heterodimer also recognizes the non-canonical E-box motifs 5'-AACGTGA-3' and 5'-CATGTGA-3'. Essential for the rhythmic interaction of CLOCK with ASS1 and plays a critical role in positively regulating CLOCK-mediated acetylation of ASS1. Plays a role in protecting against lethal sepsis by limiting the expression of immune checkpoint protein CD274 in macrophages in a PKM2-dependent manner. Regulates the diurnal rhythms of skeletal muscle metabolism via transcriptional activation of genes promoting triglyceride synthesis (DGAT2) and metabolic efficiency (COQ10B). This is Basic helix-loop-helix ARNT-like protein 1 from Rattus norvegicus (Rat).